The chain runs to 108 residues: Insulin-1 (108 aa).

A signal peptide spans 1–24 (MALLVHFLPLLALLALWEPKPTQA). Intrachain disulfides connect C31–C94, C43–C107, and C93–C98. Residues 57-85 (EVEDPQVEQLELGGSPGDLQTLALEVARQ) constitute a propeptide, c peptide.

This sequence belongs to the insulin family. As to quaternary structure, heterodimer of a B chain and an A chain linked by two disulfide bonds.

Its subcellular location is the secreted. In terms of biological role, insulin decreases blood glucose concentration. It increases cell permeability to monosaccharides, amino acids and fatty acids. It accelerates glycolysis, the pentose phosphate cycle, and glycogen synthesis in liver. This is Insulin-1 (Ins1) from Mus musculus (Mouse).